The chain runs to 77 residues: Large ribosomal subunit protein bL28 (77 aa).

Residues Met1 to His20 form a disordered region.

This sequence belongs to the bacterial ribosomal protein bL28 family.

This Pseudomonas syringae pv. tomato (strain ATCC BAA-871 / DC3000) protein is Large ribosomal subunit protein bL28.